A 563-amino-acid polypeptide reads, in one-letter code: Beta-catenin-like protein 1 (563 aa).

Methionine 1 carries the N-acetylmethionine modification. The interval 1–49 is disordered; sequence MDVGELLSYQPNRGTKRPRDDEEEELKMRRRQAGTRERGRYREEEMTVV. The Nuclear localization signal signature appears at 16–33; that stretch reads KRPRDDEEEELKMRRRQA. The span at 34–45 shows a compositional bias: basic and acidic residues; that stretch reads GTRERGRYREEE. 2 HEAT repeats span residues 79-129 and 134-176; these read ESSV…VVAT and YHLL…TLHE. Position 91 is an N6-acetyllysine (lysine 91). The short motif at 130–140 is the Nuclear export signal (NES) element; that stretch reads MPDLYHLLVEL. ARM repeat units follow at residues 178-228, 229-273, 274-323, 325-363, and 364-417; these read EEGA…MAEF, RPEM…LQDN, DENR…CLML, SNRE…AMIG, and PEGT…LLRN. A Phosphoserine modification is found at serine 389. Residues 476 to 540 adopt a coiled-coil conformation; it reads DIEDEFYLRR…HIIKEYAENI (65 aa). Residue serine 545 is modified to Phosphoserine.

In terms of assembly, component of the PRP19-CDC5L splicing complex composed of a core complex comprising a homotetramer of PRPF19, CDC5L, PLRG1 and BCAS2, and at least three less stably associated proteins CTNNBL1, CWC15 and HSPA8. Interacts directly with CWC15 and CDC5L in the complex. Interacts with AICDA; the interaction is important for the antibody diversification activity of AICDA. Interacts with PRPF31 (via its NLS). Interacts (via its N-terminal NLS) with KPNA1 and KPNA2.

Its subcellular location is the nucleus. Its function is as follows. Component of the PRP19-CDC5L complex that forms an integral part of the spliceosome and is required for activating pre-mRNA splicing. Participates in AID/AICDA-mediated somatic hypermutation (SHM) and class-switch recombination (CSR), 2 processes resulting in the production of high-affinity, mutated isotype-switched antibodies. This Bos taurus (Bovine) protein is Beta-catenin-like protein 1 (CTNNBL1).